Consider the following 276-residue polypeptide: MMKAEAAGSLPKTNAEAVRKKPGRKRYGWMKGLLLPAVIIAIWQVIGGLGVVSATVLPTPVTIVLTFKELILSGELFGHLQISIYRAALGFLLGAGLGLMIGILAGFSKRTELYLDPSLQMLRTVPHLAVTPLFILWFGFDEVSKILLIALGAFFPVYINTFNGIRGVDAKLFEVARVLEFKWHQQISKVILPAALPNILLGIRLSLGIAWLGLVVAELMGSSSGVGYMIMDARQFSQTNKVFAGIIIFAVVGKLTDSFVRLLERKLLKWRNSYEG.

7 helical membrane-spanning segments follow: residues Gly-32–Val-52, Ala-54–Gly-74, Ala-87–Phe-107, Leu-119–Asp-141, Ile-146–Val-168, Ile-199–Leu-219, and Val-242–Leu-262. An ABC transmembrane type-1 domain is found at Leu-80–Val-260.

Belongs to the binding-protein-dependent transport system permease family. CysTW subfamily.

Its subcellular location is the cell membrane. Functionally, part of a binding-protein-dependent transport system for aliphatic sulfonates. Probably responsible for the translocation of the substrate across the membrane. In Bacillus subtilis (strain 168), this protein is Putative aliphatic sulfonates transport permease protein SsuC (ssuC).